The primary structure comprises 193 residues: Acyl carrier protein phosphodiesterase (193 aa).

It belongs to the AcpH family.

The enzyme catalyses holo-[ACP] + H2O = apo-[ACP] + (R)-4'-phosphopantetheine + H(+). Converts holo-ACP to apo-ACP by hydrolytic cleavage of the phosphopantetheine prosthetic group from ACP. In Pectobacterium atrosepticum (strain SCRI 1043 / ATCC BAA-672) (Erwinia carotovora subsp. atroseptica), this protein is Acyl carrier protein phosphodiesterase.